We begin with the raw amino-acid sequence, 163 residues long: uncharacterized protein (163 aa).

4 4Fe-4S ferredoxin-type domains span residues 30-59 (REII…YSSD), 61-90 (LYIT…IIRL), 105-136 (KYEF…EYGS), and 136-163 (SKIR…IILR). [4Fe-4S] cluster contacts are provided by C39, C42, C45, C49, C70, C73, C76, C80, C116, C119, C122, C126, C145, C148, C151, and C155.

This is an uncharacterized protein from Methanocaldococcus jannaschii (strain ATCC 43067 / DSM 2661 / JAL-1 / JCM 10045 / NBRC 100440) (Methanococcus jannaschii).